We begin with the raw amino-acid sequence, 347 residues long: GMP reductase (347 aa).

Residue 108–131 (ADFQKTKDIMALTDDLIFICIDIA) coordinates NADP(+). 2 residues coordinate K(+): G181 and G183. C186 serves as the catalytic Thioimidate intermediate. An NADP(+)-binding site is contributed by 216 to 239 (IIGDGGCSCAGDVSKAFGGGADFV).

It belongs to the IMPDH/GMPR family. GuaC type 1 subfamily. In terms of assembly, homotetramer.

It carries out the reaction IMP + NH4(+) + NADP(+) = GMP + NADPH + 2 H(+). Its function is as follows. Catalyzes the irreversible NADPH-dependent deamination of GMP to IMP. It functions in the conversion of nucleobase, nucleoside and nucleotide derivatives of G to A nucleotides, and in maintaining the intracellular balance of A and G nucleotides. The chain is GMP reductase from Aliivibrio fischeri (strain ATCC 700601 / ES114) (Vibrio fischeri).